We begin with the raw amino-acid sequence, 140 residues long: uncharacterized protein (140 aa).

A VOC domain is found at 3-131; sequence RLDHIGIAVF…NGVLVELCEP (129 aa). 4 residues coordinate a divalent metal cation: H6, E53, H77, and E127.

Belongs to the methylmalonyl-CoA epimerase family.

This is an uncharacterized protein from Bacillus subtilis (strain 168).